The primary structure comprises 232 residues: DNA repair protein RecO (232 aa).

Belongs to the RecO family.

Functionally, involved in DNA repair and RecF pathway recombination. The protein is DNA repair protein RecO of Francisella tularensis subsp. novicida (strain U112).